Reading from the N-terminus, the 261-residue chain is Guanine nucleotide exchange factor BopE (261 aa).

Positions 241-253 are enriched in basic and acidic residues; sequence RRAAQDASRDEKG. The disordered stretch occupies residues 241–261; the sequence is RRAAQDASRDEKGAANAADGA.

Belongs to the GEF (guanine exchange factor) SopE family. Monomer. Interacts with human CDC42.

It is found in the secreted. In terms of biological role, activator for both CDC42 and RAC1 by directly interacting with these Rho GTPases and acting as a guanine nucleotide exchange factor (GEF). This activation results in actin cytoskeleton rearrangements and stimulates membrane ruffling, thus promoting bacterial entry into non-phagocytic cells. This Burkholderia thailandensis (strain ATCC 700388 / DSM 13276 / CCUG 48851 / CIP 106301 / E264) protein is Guanine nucleotide exchange factor BopE (bopE).